The primary structure comprises 99 residues: DNA-directed RNA polymerase subunit omega (99 aa).

The protein belongs to the RNA polymerase subunit omega family. In terms of assembly, the RNAP catalytic core consists of 2 alpha, 1 beta, 1 beta' and 1 omega subunit. When a sigma factor is associated with the core the holoenzyme is formed, which can initiate transcription.

The enzyme catalyses RNA(n) + a ribonucleoside 5'-triphosphate = RNA(n+1) + diphosphate. Functionally, promotes RNA polymerase assembly. Latches the N- and C-terminal regions of the beta' subunit thereby facilitating its interaction with the beta and alpha subunits. This chain is DNA-directed RNA polymerase subunit omega, found in Xylella fastidiosa (strain Temecula1 / ATCC 700964).